A 231-amino-acid chain; its full sequence is Biosynthetic peptidoglycan transglycosylase (231 aa).

The helical transmembrane segment at 12–34 threads the bilayer; that stretch reads AAVLAGLALLLVALAVSYRWVPP.

Belongs to the glycosyltransferase 51 family.

Its subcellular location is the cell inner membrane. It catalyses the reaction [GlcNAc-(1-&gt;4)-Mur2Ac(oyl-L-Ala-gamma-D-Glu-L-Lys-D-Ala-D-Ala)](n)-di-trans,octa-cis-undecaprenyl diphosphate + beta-D-GlcNAc-(1-&gt;4)-Mur2Ac(oyl-L-Ala-gamma-D-Glu-L-Lys-D-Ala-D-Ala)-di-trans,octa-cis-undecaprenyl diphosphate = [GlcNAc-(1-&gt;4)-Mur2Ac(oyl-L-Ala-gamma-D-Glu-L-Lys-D-Ala-D-Ala)](n+1)-di-trans,octa-cis-undecaprenyl diphosphate + di-trans,octa-cis-undecaprenyl diphosphate + H(+). It functions in the pathway cell wall biogenesis; peptidoglycan biosynthesis. Functionally, peptidoglycan polymerase that catalyzes glycan chain elongation from lipid-linked precursors. This is Biosynthetic peptidoglycan transglycosylase from Rhodospirillum centenum (strain ATCC 51521 / SW).